The chain runs to 78 residues: Large ribosomal subunit protein uL29 (78 aa).

The segment at 59-78 (VESERKRGKSLSSTQTQKEE) is disordered. Polar residues predominate over residues 68-78 (SLSSTQTQKEE).

Belongs to the universal ribosomal protein uL29 family.

The polypeptide is Large ribosomal subunit protein uL29 (Synechococcus sp. (strain JA-3-3Ab) (Cyanobacteria bacterium Yellowstone A-Prime)).